Consider the following 246-residue polypeptide: MATNTFKQQVDSIIQSRHLLQHPFYIAWTEGKLTREQLRHYAEQYFYNVLAEPTYLSAVHFNTPHFHNVENSGDISIRQEVLKNLIDEEHGEKNHPALWKAFAFALGADDASLTQADALPETENLVATFRDICINEPFYAGLAALHAFESQVPDIAAVKIDGLAKFYGMKDPDSYEFFSVHQTADIFHSQAEWAIIEKFADTPEKQAEVLAATRRACDALWKFLDGIHENYCANLICEEKTAATLH.

The Fe(2+) site is built by E88, H95, E149, H181, D185, and H188.

The protein belongs to the CADD family. Homodimer. Fe(2+) serves as cofactor. It depends on Mn(2+) as a cofactor.

Functionally, involved in de novo para-aminobenzoate (PABA) biosynthesis. Acts as a self-sacrificing or 'suicide' enzyme that utilizes its own active site tyrosine residue(s) as the substrate for PABA synthesis. The side chain of the tyrosine residue is released from the protein backbone via cleavage of the C(alpha)-C(beta) bond, leaving a glycine in place of the original tyrosine residue. Reaction requires O(2) and a reduced dimetal cofactor. The chain is 4-aminobenzoate synthase from Nitrosomonas europaea (strain ATCC 19718 / CIP 103999 / KCTC 2705 / NBRC 14298).